The chain runs to 320 residues: Ribosomal protein L11 methyltransferase (320 aa).

Threonine 165, glycine 186, aspartate 208, and asparagine 251 together coordinate S-adenosyl-L-methionine.

The protein belongs to the methyltransferase superfamily. PrmA family.

The protein resides in the cytoplasm. It catalyses the reaction L-lysyl-[protein] + 3 S-adenosyl-L-methionine = N(6),N(6),N(6)-trimethyl-L-lysyl-[protein] + 3 S-adenosyl-L-homocysteine + 3 H(+). Functionally, methylates ribosomal protein L11. This is Ribosomal protein L11 methyltransferase from Limosilactobacillus fermentum (strain NBRC 3956 / LMG 18251) (Lactobacillus fermentum).